Consider the following 369-residue polypeptide: Omega-amidase, chloroplastic (369 aa).

A chloroplast-targeting transit peptide spans 1-63 (MKSAISSSLF…SALRSISSSM (63 aa)). Position 64 is an N-acetylalanine (Ala-64). Residues 88 to 337 (FNIGLCQLSV…EAIIIAEIDY (250 aa)) form the CN hydrolase domain. Glu-127 acts as the Proton acceptor in catalysis. Lys-201 serves as the catalytic Proton donor. The active-site Nucleophile is Cys-242.

The protein belongs to the nitrilase superfamily. NIT1/NIT2 family.

The protein localises to the plastid. The protein resides in the chloroplast. It carries out the reaction a monoamide of a dicarboxylate + H2O = a dicarboxylate + NH4(+). In terms of biological role, omega-amidase involved in the metabolism of asparagine. Probably also closely coupled with glutamine transamination in the methionine salvage cycle. Can use alpha-ketosuccinamate and alpha-hydroxysuccinamate as substrates, producing respectively oxaloacetate and malate, or alpha-ketoglutaramate, producing alpha-ketoglutarate. The chain is Omega-amidase, chloroplastic from Arabidopsis thaliana (Mouse-ear cress).